A 196-amino-acid chain; its full sequence is ATP-dependent Clp protease proteolytic subunit (196 aa).

Catalysis depends on serine 96, which acts as the Nucleophile. The active site involves histidine 121.

Belongs to the peptidase S14 family. In terms of assembly, fourteen ClpP subunits assemble into 2 heptameric rings which stack back to back to give a disk-like structure with a central cavity, resembling the structure of eukaryotic proteasomes.

The protein localises to the cytoplasm. It carries out the reaction Hydrolysis of proteins to small peptides in the presence of ATP and magnesium. alpha-casein is the usual test substrate. In the absence of ATP, only oligopeptides shorter than five residues are hydrolyzed (such as succinyl-Leu-Tyr-|-NHMec, and Leu-Tyr-Leu-|-Tyr-Trp, in which cleavage of the -Tyr-|-Leu- and -Tyr-|-Trp bonds also occurs).. Its function is as follows. Cleaves peptides in various proteins in a process that requires ATP hydrolysis. Has a chymotrypsin-like activity. Plays a major role in the degradation of misfolded proteins. The chain is ATP-dependent Clp protease proteolytic subunit from Streptococcus gordonii (strain Challis / ATCC 35105 / BCRC 15272 / CH1 / DL1 / V288).